We begin with the raw amino-acid sequence, 148 residues long: TIQDAPDVAAEKARFFLAYQAALPATPPKPADPPKWYGPLASKIPAGLPGSSANVALTADLSAARNAFYNTYNAQVAAVAPKSDGPVFAVVPVATSAQWTGPVAATLPAGVPGSSPNVAETADVLNAKNAFFTTYNQQVAAVAPAPKV.

As to expression, calcified shell.

In Cancer pagurus (Rock crab), this protein is Cuticle protein CP1499.